The sequence spans 179 residues: Large ribosomal subunit protein uL6 (179 aa).

Belongs to the universal ribosomal protein uL6 family. Part of the 50S ribosomal subunit.

This protein binds to the 23S rRNA, and is important in its secondary structure. It is located near the subunit interface in the base of the L7/L12 stalk, and near the tRNA binding site of the peptidyltransferase center. This chain is Large ribosomal subunit protein uL6, found in Mycobacterium tuberculosis (strain ATCC 25618 / H37Rv).